The chain runs to 220 residues: Chaperone protein TorD (220 aa).

The protein belongs to the TorD/DmsD family. TorD subfamily.

The protein localises to the cytoplasm. Involved in the biogenesis of TorA. Acts on TorA before the insertion of the molybdenum cofactor and, as a result, probably favors a conformation of the apoenzyme that is competent for acquiring the cofactor. In Vibrio cholerae serotype O1 (strain M66-2), this protein is Chaperone protein TorD.